Here is a 442-residue protein sequence, read N- to C-terminus: tRNA-2-methylthio-N(6)-dimethylallyladenosine synthase (442 aa).

Positions 2–120 constitute an MTTase N-terminal domain; that stretch reads KKVFIRTFGC…LPKMIVDKET (119 aa). Positions 11, 49, 83, 157, 161, and 164 each coordinate [4Fe-4S] cluster. One can recognise a Radical SAM core domain in the interval 143 to 375; the sequence is RVEGGAAFVS…NEVIEAETAR (233 aa). Positions 378 to 441 constitute a TRAM domain; that stretch reads QTMIGTVQRC…TFSLRGKVVE (64 aa).

It belongs to the methylthiotransferase family. MiaB subfamily. As to quaternary structure, monomer. The cofactor is [4Fe-4S] cluster.

The protein resides in the cytoplasm. The enzyme catalyses N(6)-dimethylallyladenosine(37) in tRNA + (sulfur carrier)-SH + AH2 + 2 S-adenosyl-L-methionine = 2-methylsulfanyl-N(6)-dimethylallyladenosine(37) in tRNA + (sulfur carrier)-H + 5'-deoxyadenosine + L-methionine + A + S-adenosyl-L-homocysteine + 2 H(+). In terms of biological role, catalyzes the methylthiolation of N6-(dimethylallyl)adenosine (i(6)A), leading to the formation of 2-methylthio-N6-(dimethylallyl)adenosine (ms(2)i(6)A) at position 37 in tRNAs that read codons beginning with uridine. This is tRNA-2-methylthio-N(6)-dimethylallyladenosine synthase from Neisseria meningitidis serogroup C (strain 053442).